A 345-amino-acid chain; its full sequence is Phosphoribosylformylglycinamidine cyclo-ligase (345 aa).

Belongs to the AIR synthase family.

It is found in the cytoplasm. The catalysed reaction is 2-formamido-N(1)-(5-O-phospho-beta-D-ribosyl)acetamidine + ATP = 5-amino-1-(5-phospho-beta-D-ribosyl)imidazole + ADP + phosphate + H(+). It participates in purine metabolism; IMP biosynthesis via de novo pathway; 5-amino-1-(5-phospho-D-ribosyl)imidazole from N(2)-formyl-N(1)-(5-phospho-D-ribosyl)glycinamide: step 2/2. The chain is Phosphoribosylformylglycinamidine cyclo-ligase from Enterobacter sp. (strain 638).